Here is a 67-residue protein sequence, read N- to C-terminus: Putative antitoxin PF1308 (67 aa).

The protein belongs to the UPF0165 family.

Functionally, possibly the antitoxin component of a type II toxin-antitoxin (TA) system. This Pyrococcus furiosus (strain ATCC 43587 / DSM 3638 / JCM 8422 / Vc1) protein is Putative antitoxin PF1308.